The primary structure comprises 561 residues: Asparagine synthetase [glutamine-hydrolyzing] (561 aa).

The For GATase activity role is filled by Cys2. One can recognise a Glutamine amidotransferase type-2 domain in the interval 2 to 191 (CGIWALFGSD…PGHYEVLDLK (190 aa)). Residues 49–53 (RLAVV), 75–77 (NGE), and Asp97 contribute to the L-glutamine site. Positions 213 to 536 (HALYDSVEKL…PGRADWLTHY (324 aa)) constitute an Asparagine synthetase domain. Residues Leu256, Ile288, and 363 to 364 (SG) contribute to the ATP site. Lys385 is modified (N6-acetyllysine). Phosphothreonine is present on Thr545. Phosphoserine is present on Ser557.

It carries out the reaction L-aspartate + L-glutamine + ATP + H2O = L-asparagine + L-glutamate + AMP + diphosphate + H(+). It participates in amino-acid biosynthesis; L-asparagine biosynthesis; L-asparagine from L-aspartate (L-Gln route): step 1/1. The sequence is that of Asparagine synthetase [glutamine-hydrolyzing] (ASNS) from Mesocricetus auratus (Golden hamster).